Consider the following 478-residue polypeptide: Argininosuccinate lyase (478 aa).

Belongs to the lyase 1 family. Argininosuccinate lyase subfamily.

Its subcellular location is the cytoplasm. It catalyses the reaction 2-(N(omega)-L-arginino)succinate = fumarate + L-arginine. It participates in amino-acid biosynthesis; L-arginine biosynthesis; L-arginine from L-ornithine and carbamoyl phosphate: step 3/3. This Leptospira biflexa serovar Patoc (strain Patoc 1 / Ames) protein is Argininosuccinate lyase.